A 250-amino-acid polypeptide reads, in one-letter code: 5'-nucleotidase SurE (250 aa).

Residues D8, D9, S40, and N95 each coordinate a divalent metal cation.

It belongs to the SurE nucleotidase family. It depends on a divalent metal cation as a cofactor.

The protein resides in the cytoplasm. It carries out the reaction a ribonucleoside 5'-phosphate + H2O = a ribonucleoside + phosphate. In terms of biological role, nucleotidase that shows phosphatase activity on nucleoside 5'-monophosphates. In Nitratidesulfovibrio vulgaris (strain ATCC 29579 / DSM 644 / CCUG 34227 / NCIMB 8303 / VKM B-1760 / Hildenborough) (Desulfovibrio vulgaris), this protein is 5'-nucleotidase SurE.